The chain runs to 158 residues: MNKTLIGHLDVSSSNLNNLAYKIYSTIKGMIENFDMVDKRAIVYMLKTYKEAFEITLSDFEFVLNELPTEDKLYPYIDYLVENLKYGFDALDELIYIVDREFDERNDNFKNLIKETLSFLQDITYCVHNWIKELRDMLTNTNQTEEEENSNDSESEED.

This is an uncharacterized protein from Acidianus convivator (ABV).